We begin with the raw amino-acid sequence, 360 residues long: Serine/threonine transporter SstT (360 aa).

Transmembrane regions (helical) follow at residues 17–37 (IGIG…ITVI), 40–60 (FGSL…LTLV), 78–98 (VICL…GASY), 138–158 (ALAT…GLAF), 179–199 (VVGW…FDTI), 212–232 (LLLL…NPLI), 295–315 (MAGA…TLGI), 316–336 (SVDF…AAGA), and 339–359 (VAGG…VPYV).

It belongs to the dicarboxylate/amino acid:cation symporter (DAACS) (TC 2.A.23) family.

The protein resides in the cell membrane. It carries out the reaction L-serine(in) + Na(+)(in) = L-serine(out) + Na(+)(out). It catalyses the reaction L-threonine(in) + Na(+)(in) = L-threonine(out) + Na(+)(out). In terms of biological role, involved in the import of serine and threonine into the cell, with the concomitant import of sodium (symport system). The protein is Serine/threonine transporter SstT of Streptococcus suis (strain 05ZYH33).